We begin with the raw amino-acid sequence, 407 residues long: MVWSWVAMASRWGPLVGLAPRCLWLLGAVLLMDASARPANHSSTRERAANREENEILPPDHLNGVKLEMDGHLNRGFHQEVFLGKDLGGFEEDVEPRRSRRKLMVIFSKVDVNTDRKISAKEMQRWIMEKTAEHFQEAMEESKTHFRAVDPDGDGHVSWDEYKVKFLASKGHSEKEVADAIRLNEELKVDEETQEVLENLKDRWYQADSPPADLLLTEEEFLSFLHPEHSRGMLRFMVKEIVRDLGEAGSSLAGAPGPGDQRQGPGIAGKSGKVLREPQPGCGLIRSRLTDQDGDKQLSLPEFVSLPVGTVENQQGQDIDDNWVKDRKKEFEELIDSNHDGIVTAEELESYMDPMNEYNALNEAKQMIAVADENQNHHLEPEEVLKYSEFFTGSKLVDYARSVHEEF.

The first 35 residues, 1–35, serve as a signal peptide directing secretion; that stretch reads MVWSWVAMASRWGPLVGLAPRCLWLLGAVLLMDAS. Asn-40 is a glycosylation site (N-linked (GlcNAc...) asparagine). EF-hand domains follow at residues 98 to 133 and 137 to 172; these read RSRR…KTAE and EAME…SKGH. The residue at position 99 (Ser-99) is a Phosphoserine. Residues Asp-111, Asn-113, Asp-115, Lys-117, Glu-122, Asp-150, Asp-152, Asp-154, His-156, and Glu-161 each coordinate Ca(2+). Phosphothreonine occurs at positions 193 and 217. The span at 249 to 259 shows a compositional bias: low complexity; that stretch reads GSSLAGAPGPG. A disordered region spans residues 249–282; the sequence is GSSLAGAPGPGDQRQGPGIAGKSGKVLREPQPGC. 5 residues coordinate Ca(2+): Asp-291, Asp-293, Asp-295, Gln-297, and Glu-302. EF-hand domains follow at residues 291 to 313, 323 to 358, and 359 to 394; these read DQDG…TVEN, WVKD…MNEY, and NALN…FTGS. The residue at position 310 (Thr-310) is a Phosphothreonine. Asp-336, Asn-338, and Asp-340 together coordinate Ca(2+). The residue at position 344 (Thr-344) is a Phosphothreonine. 6 residues coordinate Ca(2+): Glu-347, Asp-372, Asn-374, Asn-376, His-378, and Glu-383. The tract at residues 354-407 is necessary for intracellular retention in Golgi apparatus lumen; sequence PMNEYNALNEAKQMIAVADENQNHHLEPEEVLKYSEFFTGSKLVDYARSVHEEF.

It belongs to the CREC family.

It is found in the golgi apparatus lumen. In terms of biological role, may regulate calcium-dependent activities in the endoplasmic reticulum lumen or post-ER compartment. This chain is 45 kDa calcium-binding protein (SDF4), found in Macaca fascicularis (Crab-eating macaque).